A 178-amino-acid chain; its full sequence is Orotate phosphoribosyltransferase (178 aa).

5-phospho-alpha-D-ribose 1-diphosphate is bound by residues R92, K93, K96, and 118 to 126 (EDVTTTGGS). Residues T122 and R150 each coordinate orotate.

Belongs to the purine/pyrimidine phosphoribosyltransferase family. PyrE subfamily. As to quaternary structure, homodimer. Mg(2+) serves as cofactor.

It catalyses the reaction orotidine 5'-phosphate + diphosphate = orotate + 5-phospho-alpha-D-ribose 1-diphosphate. It functions in the pathway pyrimidine metabolism; UMP biosynthesis via de novo pathway; UMP from orotate: step 1/2. Catalyzes the transfer of a ribosyl phosphate group from 5-phosphoribose 1-diphosphate to orotate, leading to the formation of orotidine monophosphate (OMP). This is Orotate phosphoribosyltransferase from Methanosphaera stadtmanae (strain ATCC 43021 / DSM 3091 / JCM 11832 / MCB-3).